The chain runs to 88 residues: MGTIATNPEGITNPPIDELLEKTTSKYALVIFAAKRARQVNAYYSQLGEGLLEYVGPLVETTPQEKPLSIAMREINGGLLTAEPTDQP.

This sequence belongs to the RNA polymerase subunit omega family. The RNAP catalytic core consists of 2 alpha, 1 beta, 1 beta' and 1 omega subunit. When a sigma factor is associated with the core the holoenzyme is formed, which can initiate transcription.

It catalyses the reaction RNA(n) + a ribonucleoside 5'-triphosphate = RNA(n+1) + diphosphate. Promotes RNA polymerase assembly. Latches the N- and C-terminal regions of the beta' subunit thereby facilitating its interaction with the beta and alpha subunits. The protein is DNA-directed RNA polymerase subunit omega of Salinispora arenicola (strain CNS-205).